We begin with the raw amino-acid sequence, 126 residues long: Glycerol dehydrogenase small subunit (126 aa).

The next 4 helical transmembrane spans lie at Trp13 to Gly33, Gly41 to Met61, Ala67 to Phe87, and Leu92 to Val112.

The protein resides in the cell membrane. It carries out the reaction glycerol + A = dihydroxyacetone + AH2. Functionally, catalyzes the oxidation of glycerol to glycerone. Also acts, more slowly, on a number of other polyols including D-sorbitol, D-arabinitol, D-mannitol, meso-erythritol, adonitol and propylene glycol. In Gluconobacter thailandicus, this protein is Glycerol dehydrogenase small subunit (sldB).